A 733-amino-acid polypeptide reads, in one-letter code: N-alpha-acetyltransferase 35, NatC auxiliary subunit (733 aa).

It belongs to the MAK10 family. As to quaternary structure, component of the N-terminal acetyltransferase C (NatC) complex, which is composed of MAK3, MAK10 and MAK31.

The protein resides in the cytoplasm. Its function is as follows. Component of the NatC N-terminal acetyltransferase, which catalyzes acetylation of the N-terminus Met of L-A virus Gag protein. MAK10 has a role in the propagation of L-A and M viruses, perhaps in the viral assembly. It is apparently directly needed for optimum respiration. This Saccharomyces cerevisiae (strain ATCC 204508 / S288c) (Baker's yeast) protein is N-alpha-acetyltransferase 35, NatC auxiliary subunit (MAK10).